Reading from the N-terminus, the 114-residue chain is MASSMLGFLLLLLLLMAAHPGPSEAQHWSHGWYPGGKRASNSPQDPQSALRPPAPSAAQTAHSFRSAALASPEDSVPWEGRTTAGWSLRRKQHLMRTLLSAAGAPRPAAVPIKP.

The N-terminal stretch at 1–25 (MASSMLGFLLLLLLLMAAHPGPSEA) is a signal peptide. Residues 22–80 (PSEAQHWSHGWYPGGKRASNSPQDPQSALRPPAPSAAQTAHSFRSAALASPEDSVPWEG) are disordered. At Gly35 the chain carries Glycine amide.

Belongs to the GnRH family. Midbrain.

It localises to the secreted. In terms of biological role, stimulates the secretion of gonadotropins; it stimulates the secretion of both luteinizing and follicle-stimulating hormones. This Tupaia belangeri (Common tree shrew) protein is Progonadoliberin-2 (GNRH2).